We begin with the raw amino-acid sequence, 1024 residues long: Beta-galactosidase (1024 aa).

The substrate site is built by asparagine 103 and aspartate 202. Residue aspartate 202 participates in Na(+) binding. The Mg(2+) site is built by glutamate 417, histidine 419, and glutamate 462. Substrate contacts are provided by residues glutamate 462 and 538 to 541 (EYAH). Glutamate 462 functions as the Proton donor in the catalytic mechanism. Glutamate 538 (nucleophile) is an active-site residue. Asparagine 598 is a binding site for Mg(2+). Phenylalanine 602 and asparagine 605 together coordinate Na(+). Substrate-binding residues include asparagine 605 and tryptophan 1000.

The protein belongs to the glycosyl hydrolase 2 family. Homotetramer. Mg(2+) serves as cofactor. Na(+) is required as a cofactor.

It catalyses the reaction Hydrolysis of terminal non-reducing beta-D-galactose residues in beta-D-galactosides.. The polypeptide is Beta-galactosidase (Escherichia coli O17:K52:H18 (strain UMN026 / ExPEC)).